We begin with the raw amino-acid sequence, 368 residues long: BTB/POZ and TAZ domain-containing protein 5 (368 aa).

The disordered stretch occupies residues 1-25; it reads MENMDDFSPENVLAPPPPPPPMKKS. A BTB domain is found at 55-123; it reads ADVLIHTDDN…LYSSCYEKQD (69 aa). The TAZ-type zinc finger occupies 233–324; that stretch reads QTYTQLYEAM…SEQCKVPLCS (92 aa). A caM-binding region spans residues 335–358; the sequence is RKDEKRWKLLVRNVLSTKRIGGSP.

As to quaternary structure, interacts with CUL3A. Preferentially expressed in young leaves, roots and stems.

The protein resides in the cytoplasm. It functions in the pathway protein modification; protein ubiquitination. Its function is as follows. May act as a substrate-specific adapter of an E3 ubiquitin-protein ligase complex (CUL3-RBX1-BTB) which mediates the ubiquitination and subsequent proteasomal degradation of target proteins. This chain is BTB/POZ and TAZ domain-containing protein 5 (BT5), found in Arabidopsis thaliana (Mouse-ear cress).